Consider the following 477-residue polypeptide: Glutamate--tRNA ligase 2 (477 aa).

Positions 12–22 (PSPTGRMHLGN) match the 'HIGH' region motif. Zn(2+) is bound by residues Cys109, Cys111, Cys136, and His138. A 'KMSKS' region motif is present at residues 253–257 (PLSKR). ATP is bound at residue Lys256.

The protein belongs to the class-I aminoacyl-tRNA synthetase family. Glutamate--tRNA ligase type 1 subfamily. As to quaternary structure, monomer. It depends on Zn(2+) as a cofactor.

The protein resides in the cytoplasm. It catalyses the reaction tRNA(Glu) + L-glutamate + ATP = L-glutamyl-tRNA(Glu) + AMP + diphosphate. Its function is as follows. Catalyzes the attachment of glutamate to tRNA(Glu) in a two-step reaction: glutamate is first activated by ATP to form Glu-AMP and then transferred to the acceptor end of tRNA(Glu). The polypeptide is Glutamate--tRNA ligase 2 (Alkalilimnicola ehrlichii (strain ATCC BAA-1101 / DSM 17681 / MLHE-1)).